Reading from the N-terminus, the 155-residue chain is Small ribosomal subunit protein uS7cz/uS7cy (155 aa).

It belongs to the universal ribosomal protein uS7 family. Part of the 30S ribosomal subunit.

The protein localises to the plastid. It localises to the chloroplast. Its function is as follows. One of the primary rRNA binding proteins, it binds directly to 16S rRNA where it nucleates assembly of the head domain of the 30S subunit. The polypeptide is Small ribosomal subunit protein uS7cz/uS7cy (rps7-A) (Angiopteris evecta (Mule's foot fern)).